Consider the following 101-residue polypeptide: MNSHFASAHTPFYINTKEGRYLVLKAVKVCDVRTVECEGSKASCVLKVDKPSSPACERRPSSPSRCERMNNPRKQVPFMRTDMLQNMFAANRDNVASRLLN.

The interval 51–73 is disordered; sequence PSSPACERRPSSPSRCERMNNPR. Phosphoserine occurs at positions 53 and 62. Residues 56–70 show a composition bias toward basic and acidic residues; sequence CERRPSSPSRCERMN.

It belongs to the orthopoxvirus OPG062 family. As to quaternary structure, self-associates to form high molecular-weight forms. Interacts with protein OPG157/A30. Interacts with host RICTOR and RPTOR; these interactions disrupt the mTORC1 and mTORC2 crosstalk. In terms of processing, phosphorylated on two serines. While these phosphorylations do not play a role in virion assembly; they are essential for the interaction with host RICTOR and RPTOR.

The protein resides in the virion. In terms of biological role, plays an essential role in virion assembly and morphogenesis. Also plays a role in the inhibition of host immune response by dysregulating mTOR. Sequesters host RICTOR and RPTOR, thereby disrupting mTORC1 and mTORC2 crosstalk. In turn, blocks the host antiviral response in part through mTOR-dependent degradation of cGAS, the primary poxvirus sensor. The sequence is that of Phosphoprotein OPG062 (OPG062) from Vaccinia virus (strain Western Reserve) (VACV).